The following is a 574-amino-acid chain: Calcium-dependent protein kinase 9 (574 aa).

Positions 1–64 (MGNTCCVAPA…RARAKPNPYD (64 aa)) are disordered. Gly2 carries the N-myristoyl glycine lipid modification. Residues 28–40 (KSPAPSATTTTAT) show a composition bias toward low complexity. Residues 101 to 359 (YQLGRELGRG…AQQVLDHPWL (259 aa)) enclose the Protein kinase domain. ATP is bound by residues 107 to 115 (LGRGEFGVT) and Lys130. Asp225 serves as the catalytic Proton acceptor. The segment at 365-395 (APNVPLGDVVRARLKQFSLMNRLKKKAMRVI) is autoinhibitory domain. EF-hand domains follow at residues 402–437 (EEVE…VGSK), 438–473 (LAEP…LQRL), 474–509 (SNDN…DSGH), and 510–545 (ADDA…GTDW). Ca(2+) is bound by residues Asp415, Asp417, Asn419, Arg421, Glu426, Asp451, Asp453, Asn455, Tyr457, Glu462, Asp487, Asp489, Ser491, Tyr493, Glu498, Asp523, Asp525, Asp527, Arg529, and Glu534.

This sequence belongs to the protein kinase superfamily. Ser/Thr protein kinase family. CDPK subfamily. Expressed in leaf blades and stems. Expressed at low levels in anthers and spikelets.

Its subcellular location is the membrane. It carries out the reaction L-seryl-[protein] + ATP = O-phospho-L-seryl-[protein] + ADP + H(+). The catalysed reaction is L-threonyl-[protein] + ATP = O-phospho-L-threonyl-[protein] + ADP + H(+). Its activity is regulated as follows. Activated by calcium. Autophosphorylation may play an important role in the regulation of the kinase activity. Functionally, may play a role in signal transduction pathways that involve calcium as a second messenger. Functions in signal transduction pathways that positively regulate responses to drought, osmotic, and dehydration stress. Regulates expression of stress-associated genes in response to drought. Involved in tolerance to drought stress by increasing proline and soluble sugars, and improving stomatal closure. Required for pollen maturation and spikelet fertility. This Oryza sativa subsp. japonica (Rice) protein is Calcium-dependent protein kinase 9.